Reading from the N-terminus, the 499-residue chain is Aspartyl/glutamyl-tRNA(Asn/Gln) amidotransferase subunit B (499 aa).

The protein belongs to the GatB/GatE family. GatB subfamily. As to quaternary structure, heterotrimer of A, B and C subunits.

The enzyme catalyses L-glutamyl-tRNA(Gln) + L-glutamine + ATP + H2O = L-glutaminyl-tRNA(Gln) + L-glutamate + ADP + phosphate + H(+). It carries out the reaction L-aspartyl-tRNA(Asn) + L-glutamine + ATP + H2O = L-asparaginyl-tRNA(Asn) + L-glutamate + ADP + phosphate + 2 H(+). In terms of biological role, allows the formation of correctly charged Asn-tRNA(Asn) or Gln-tRNA(Gln) through the transamidation of misacylated Asp-tRNA(Asn) or Glu-tRNA(Gln) in organisms which lack either or both of asparaginyl-tRNA or glutaminyl-tRNA synthetases. The reaction takes place in the presence of glutamine and ATP through an activated phospho-Asp-tRNA(Asn) or phospho-Glu-tRNA(Gln). In Salinispora arenicola (strain CNS-205), this protein is Aspartyl/glutamyl-tRNA(Asn/Gln) amidotransferase subunit B.